Reading from the N-terminus, the 393-residue chain is Major outer membrane porin, serovar L1 (393 aa).

The first 22 residues, 1–22 (MKKLLKSVLVFAALSSASSLQA), serve as a signal peptide directing secretion.

This sequence belongs to the chlamydial porin (CP) (TC 1.B.2) family. As to quaternary structure, part of a disulfide cross-linked outer membrane complex (COMC) composed of the major outer membrane porin (MOMP), the small cysteine-rich protein (OmcA) and the large cysteine-rich periplasmic protein (OmcB).

The protein resides in the cell outer membrane. In terms of biological role, in elementary bodies (EBs, the infectious stage, which is able to survive outside the host cell) provides the structural integrity of the outer envelope through disulfide cross-links with the small cysteine-rich protein and the large cysteine-rich periplasmic protein. It has been described in publications as the Sarkosyl-insoluble COMC (Chlamydia outer membrane complex), and serves as the functional equivalent of peptidoglycan. Permits diffusion of specific solutes through the outer membrane. This Chlamydia trachomatis protein is Major outer membrane porin, serovar L1 (ompA).